We begin with the raw amino-acid sequence, 543 residues long: Cytochrome P450 1B1 (543 aa).

Position 470 (cysteine 470) interacts with heme.

The protein belongs to the cytochrome P450 family. The cofactor is heme. Expressed in heart, brain, lung, skeletal muscle, kidney, spleen, thymus, prostate, testis, ovary, small intestine, colon, and peripheral blood leukocytes. Expressed in retinal endothelial cells and umbilical vein endothelial cells (at protein level).

The protein localises to the endoplasmic reticulum membrane. It is found in the microsome membrane. The protein resides in the mitochondrion. It catalyses the reaction an organic molecule + reduced [NADPH--hemoprotein reductase] + O2 = an alcohol + oxidized [NADPH--hemoprotein reductase] + H2O + H(+). It carries out the reaction 17beta-estradiol + reduced [NADPH--hemoprotein reductase] + O2 = 2-hydroxy-17beta-estradiol + oxidized [NADPH--hemoprotein reductase] + H2O + H(+). The enzyme catalyses 17beta-estradiol + reduced [NADPH--hemoprotein reductase] + O2 = 4-hydroxy-17beta-estradiol + oxidized [NADPH--hemoprotein reductase] + H2O + H(+). The catalysed reaction is estrone + reduced [NADPH--hemoprotein reductase] + O2 = 2-hydroxyestrone + oxidized [NADPH--hemoprotein reductase] + H2O + H(+). It catalyses the reaction estrone + reduced [NADPH--hemoprotein reductase] + O2 = 4-hydroxyestrone + oxidized [NADPH--hemoprotein reductase] + H2O + H(+). It carries out the reaction testosterone + reduced [NADPH--hemoprotein reductase] + O2 = 6beta,17beta-dihydroxyandrost-4-en-3-one + oxidized [NADPH--hemoprotein reductase] + H2O + H(+). The enzyme catalyses progesterone + reduced [NADPH--hemoprotein reductase] + O2 = 6beta-hydroxyprogesterone + oxidized [NADPH--hemoprotein reductase] + H2O + H(+). The catalysed reaction is progesterone + reduced [NADPH--hemoprotein reductase] + O2 = 16alpha-hydroxyprogesterone + oxidized [NADPH--hemoprotein reductase] + H2O + H(+). It catalyses the reaction all-trans-retinol + reduced [NADPH--hemoprotein reductase] + O2 = all-trans-retinal + oxidized [NADPH--hemoprotein reductase] + 2 H2O + H(+). It carries out the reaction all-trans-retinal + reduced [NADPH--hemoprotein reductase] + O2 = all-trans-retinoate + oxidized [NADPH--hemoprotein reductase] + H2O + 2 H(+). The enzyme catalyses (5Z,8Z,11Z,14Z)-eicosatetraenoate + reduced [NADPH--hemoprotein reductase] + O2 = (8R,9S)-epoxy-(5Z,11Z,14Z)-eicosatrienoate + oxidized [NADPH--hemoprotein reductase] + H2O + H(+). The catalysed reaction is (5Z,8Z,11Z,14Z)-eicosatetraenoate + reduced [NADPH--hemoprotein reductase] + O2 = (11R,12S)-epoxy-(5Z,8Z,14Z)-eicosatrienoate + oxidized [NADPH--hemoprotein reductase] + H2O + H(+). It catalyses the reaction (5Z,8Z,11Z,14Z)-eicosatetraenoate + reduced [NADPH--hemoprotein reductase] + O2 = (11S,12R)-epoxy-(5Z,8Z,14Z)-eicosatrienoate + oxidized [NADPH--hemoprotein reductase] + H2O + H(+). It carries out the reaction (5Z,8Z,11Z,14Z)-eicosatetraenoate + reduced [NADPH--hemoprotein reductase] + O2 = (14R,15S)-epoxy-(5Z,8Z,11Z)-eicosatrienoate + oxidized [NADPH--hemoprotein reductase] + H2O + H(+). The enzyme catalyses (5S)-hydroperoxy-(6E,8Z,11Z,14Z)-eicosatetraenoate = 5-oxo-(6E,8Z,11Z,14Z)-eicosatetraenoate + H2O. The catalysed reaction is (12S)-hydroperoxy-(5Z,8Z,10E,14Z)-eicosatetraenoate = 12-oxo-(5Z,8Z,10E,14Z)-eicosatetraenoate + H2O. It catalyses the reaction (13S)-hydroperoxy-(9Z,11E)-octadecadienoate = 13-oxo-(9Z,11E)-octadecadienoate + H2O. It carries out the reaction (15S)-hydroperoxy-(5Z,8Z,11Z,13E)-eicosatetraenoate = 15-oxo-(5Z,8Z,11Z,13E)-eicosatetraenoate + H2O. Its pathway is steroid hormone biosynthesis. The protein operates within cofactor metabolism; retinol metabolism. It participates in lipid metabolism; arachidonate metabolism. With respect to regulation, enzyme activity is increased by liposomes containing anionic phospholipids, phosphatidic acid and cardiolipin. Inhibited by naringenin with an IC(50) of 5 uM. Enzyme activity is increased by cytochrome b5. In terms of biological role, a cytochrome P450 monooxygenase involved in the metabolism of various endogenous substrates, including fatty acids, steroid hormones and vitamins. Mechanistically, uses molecular oxygen inserting one oxygen atom into a substrate, and reducing the second into a water molecule, with two electrons provided by NADPH via cytochrome P450 reductase (NADPH--hemoprotein reductase). Exhibits catalytic activity for the formation of hydroxyestrogens from estrone (E1) and 17beta-estradiol (E2), namely 2- and 4-hydroxy E1 and E2. Displays a predominant hydroxylase activity toward E2 at the C-4 position. Metabolizes testosterone and progesterone to B or D ring hydroxylated metabolites. May act as a major enzyme for all-trans retinoic acid biosynthesis in extrahepatic tissues. Catalyzes two successive oxidative transformation of all-trans retinol to all-trans retinal and then to the active form all-trans retinoic acid. Catalyzes the epoxidation of double bonds of certain PUFA. Converts arachidonic acid toward epoxyeicosatrienoic acid (EpETrE) regioisomers, 8,9-, 11,12-, and 14,15- EpETrE, that function as lipid mediators in the vascular system. Additionally, displays dehydratase activity toward oxygenated eicosanoids hydroperoxyeicosatetraenoates (HpETEs). This activity is independent of cytochrome P450 reductase, NADPH, and O2. Also involved in the oxidative metabolism of xenobiotics, particularly converting polycyclic aromatic hydrocarbons and heterocyclic aryl amines procarcinogens to DNA-damaging products. Plays an important role in retinal vascular development. Under hyperoxic O2 conditions, promotes retinal angiogenesis and capillary morphogenesis, likely by metabolizing the oxygenated products generated during the oxidative stress. Also, contributes to oxidative homeostasis and ultrastructural organization and function of trabecular meshwork tissue through modulation of POSTN expression. This is Cytochrome P450 1B1 from Homo sapiens (Human).